The following is a 246-amino-acid chain: 1-(5-phosphoribosyl)-5-[(5-phosphoribosylamino)methylideneamino] imidazole-4-carboxamide isomerase (246 aa).

The active-site Proton acceptor is the aspartate 7. Aspartate 130 functions as the Proton donor in the catalytic mechanism.

The protein belongs to the HisA/HisF family.

It localises to the cytoplasm. The catalysed reaction is 1-(5-phospho-beta-D-ribosyl)-5-[(5-phospho-beta-D-ribosylamino)methylideneamino]imidazole-4-carboxamide = 5-[(5-phospho-1-deoxy-D-ribulos-1-ylimino)methylamino]-1-(5-phospho-beta-D-ribosyl)imidazole-4-carboxamide. It participates in amino-acid biosynthesis; L-histidine biosynthesis; L-histidine from 5-phospho-alpha-D-ribose 1-diphosphate: step 4/9. The protein is 1-(5-phosphoribosyl)-5-[(5-phosphoribosylamino)methylideneamino] imidazole-4-carboxamide isomerase of Sodalis glossinidius (strain morsitans).